We begin with the raw amino-acid sequence, 393 residues long: uncharacterized protein (393 aa).

Residues 164 to 183 (ASDPHPGKNSPASPTGENKE) are disordered. Over residues 173-183 (SPASPTGENKE) the composition is skewed to polar residues.

This is an uncharacterized protein from Treponema pallidum (strain Nichols).